The primary structure comprises 276 residues: MRGDGIRARKALGQNFLTDRSVLSRIAALVSAGAGERILEIGPGKGALTSYLAEQAGQLVAVELDDRLVPLLRGSFAGNPSVTIIEGDILDLDLRETLGRYGTPPWKVAANLPYNISTPVLFRLLDARDLFSRLVLMLQKEVGNRLAAGPGSKEYGVLSVLFQLHFDVTREILVRPGSFHPVPKVDSVVLLFVPLAQPRVDVGDEDYFRRVVKASFAMRRKTLWNCLKGGALGVPTDGIRDVLARCGIDEGRRGETLSLQEFASLTKGLLAAGGSL.

S-adenosyl-L-methionine-binding residues include Asn-15, Leu-17, Gly-42, Glu-63, Asp-88, and Asn-111.

The protein belongs to the class I-like SAM-binding methyltransferase superfamily. rRNA adenine N(6)-methyltransferase family. RsmA subfamily.

It is found in the cytoplasm. The catalysed reaction is adenosine(1518)/adenosine(1519) in 16S rRNA + 4 S-adenosyl-L-methionine = N(6)-dimethyladenosine(1518)/N(6)-dimethyladenosine(1519) in 16S rRNA + 4 S-adenosyl-L-homocysteine + 4 H(+). Specifically dimethylates two adjacent adenosines (A1518 and A1519) in the loop of a conserved hairpin near the 3'-end of 16S rRNA in the 30S particle. May play a critical role in biogenesis of 30S subunits. The protein is Ribosomal RNA small subunit methyltransferase A of Geobacter sulfurreducens (strain ATCC 51573 / DSM 12127 / PCA).